Reading from the N-terminus, the 124-residue chain is Small ribosomal subunit protein uS12 (124 aa).

Positions 1-29 are disordered; that stretch reads MATINQLVRKGRKRRVAKSNVPALEASPQ. D89 carries the post-translational modification 3-methylthioaspartic acid. The disordered stretch occupies residues 101-124; the sequence is AADTAGVDKRRQGRSKYGAKRPKS. Residues 111–124 are compositionally biased toward basic residues; sequence RQGRSKYGAKRPKS.

This sequence belongs to the universal ribosomal protein uS12 family. In terms of assembly, part of the 30S ribosomal subunit. Contacts proteins S8 and S17. May interact with IF1 in the 30S initiation complex.

Functionally, with S4 and S5 plays an important role in translational accuracy. Interacts with and stabilizes bases of the 16S rRNA that are involved in tRNA selection in the A site and with the mRNA backbone. Located at the interface of the 30S and 50S subunits, it traverses the body of the 30S subunit contacting proteins on the other side and probably holding the rRNA structure together. The combined cluster of proteins S8, S12 and S17 appears to hold together the shoulder and platform of the 30S subunit. This is Small ribosomal subunit protein uS12 from Alkalilimnicola ehrlichii (strain ATCC BAA-1101 / DSM 17681 / MLHE-1).